The sequence spans 415 residues: Tyrosine--tRNA ligase (415 aa).

An L-tyrosine-binding site is contributed by tyrosine 34. The 'HIGH' region motif lies at 39–48 (PSADSLHLGN). L-tyrosine contacts are provided by tyrosine 162 and glutamine 166. The short motif at 224 to 228 (KFGKS) is the 'KMSKS' region element. Lysine 227 provides a ligand contact to ATP. The S4 RNA-binding domain occupies 346–413 (IKIIDLLNLA…KRNYFLIVWN (68 aa)).

Belongs to the class-I aminoacyl-tRNA synthetase family. TyrS type 1 subfamily. As to quaternary structure, homodimer.

It localises to the cytoplasm. The enzyme catalyses tRNA(Tyr) + L-tyrosine + ATP = L-tyrosyl-tRNA(Tyr) + AMP + diphosphate + H(+). In terms of biological role, catalyzes the attachment of tyrosine to tRNA(Tyr) in a two-step reaction: tyrosine is first activated by ATP to form Tyr-AMP and then transferred to the acceptor end of tRNA(Tyr). In Ureaplasma urealyticum serovar 10 (strain ATCC 33699 / Western), this protein is Tyrosine--tRNA ligase.